The chain runs to 100 residues: NADH-quinone oxidoreductase subunit K (100 aa).

Transmembrane regions (helical) follow at residues 4 to 24, 28 to 48, and 60 to 80; these read LQHG…GLLI, LLFM…AFVV, and VMYI…LALL.

This sequence belongs to the complex I subunit 4L family. NDH-1 is composed of 13 different subunits. Subunits NuoA, H, J, K, L, M, N constitute the membrane sector of the complex.

The protein resides in the cell inner membrane. The enzyme catalyses a quinone + NADH + 5 H(+)(in) = a quinol + NAD(+) + 4 H(+)(out). In terms of biological role, NDH-1 shuttles electrons from NADH, via FMN and iron-sulfur (Fe-S) centers, to quinones in the respiratory chain. The immediate electron acceptor for the enzyme in this species is believed to be ubiquinone. Couples the redox reaction to proton translocation (for every two electrons transferred, four hydrogen ions are translocated across the cytoplasmic membrane), and thus conserves the redox energy in a proton gradient. In Pectobacterium carotovorum subsp. carotovorum (strain PC1), this protein is NADH-quinone oxidoreductase subunit K.